A 309-amino-acid chain; its full sequence is Probable manganese-dependent inorganic pyrophosphatase (309 aa).

Residues histidine 9, aspartate 13, aspartate 15, aspartate 75, histidine 97, and aspartate 149 each contribute to the Mn(2+) site.

The protein belongs to the PPase class C family. Mn(2+) serves as cofactor.

It is found in the cytoplasm. The catalysed reaction is diphosphate + H2O = 2 phosphate + H(+). In Bacillus cereus (strain B4264), this protein is Probable manganese-dependent inorganic pyrophosphatase.